The sequence spans 65 residues: Large ribosomal subunit protein bL32 (65 aa).

It belongs to the bacterial ribosomal protein bL32 family.

The chain is Large ribosomal subunit protein bL32 from Tropheryma whipplei (strain TW08/27) (Whipple's bacillus).